Consider the following 87-residue polypeptide: Small ribosomal subunit protein bS20 (87 aa).

It belongs to the bacterial ribosomal protein bS20 family.

Binds directly to 16S ribosomal RNA. The protein is Small ribosomal subunit protein bS20 of Geobacter sulfurreducens (strain ATCC 51573 / DSM 12127 / PCA).